A 512-amino-acid polypeptide reads, in one-letter code: Maturase K (512 aa).

This sequence belongs to the intron maturase 2 family. MatK subfamily.

It localises to the plastid. It is found in the chloroplast. Its function is as follows. Usually encoded in the trnK tRNA gene intron. Probably assists in splicing its own and other chloroplast group II introns. This chain is Maturase K, found in Lilium tsingtauense (Twilight lily).